The following is a 440-amino-acid chain: Ribosomal protein uS12 methylthiotransferase RimO (440 aa).

The region spanning 2 to 118 is the MTTase N-terminal domain; the sequence is KKAGIIHLGC…FVSLITSNGE (117 aa). [4Fe-4S] cluster contacts are provided by Cys-11, Cys-47, Cys-81, Cys-154, Cys-158, and Cys-161. Residues 140 to 370 enclose the Radical SAM core domain; sequence ISPNFWVYVK…MSTQKEISKK (231 aa). One can recognise a TRAM domain in the interval 373–440; sequence AKLLGREFDV…RAYDLLGELV (68 aa).

This sequence belongs to the methylthiotransferase family. RimO subfamily. [4Fe-4S] cluster is required as a cofactor.

The protein localises to the cytoplasm. The catalysed reaction is L-aspartate(89)-[ribosomal protein uS12]-hydrogen + (sulfur carrier)-SH + AH2 + 2 S-adenosyl-L-methionine = 3-methylsulfanyl-L-aspartate(89)-[ribosomal protein uS12]-hydrogen + (sulfur carrier)-H + 5'-deoxyadenosine + L-methionine + A + S-adenosyl-L-homocysteine + 2 H(+). Its function is as follows. Catalyzes the methylthiolation of an aspartic acid residue of ribosomal protein uS12. This is Ribosomal protein uS12 methylthiotransferase RimO from Dictyoglomus thermophilum (strain ATCC 35947 / DSM 3960 / H-6-12).